Here is a 380-residue protein sequence, read N- to C-terminus: Probable G-protein coupled receptor 132 (380 aa).

The Extracellular portion of the chain corresponds to 1–45 (MCPMLLKNGYNGNATPVTTTAPWASLGLSAKTCNNVSFEESRIVL). Asn-35 is a glycosylation site (N-linked (GlcNAc...) asparagine). A helical membrane pass occupies residues 46-68 (VVVYSAVCTLGVPANCLTAWLAL). Residues 69-79 (LQVLQGNVLAV) are Cytoplasmic-facing. The helical transmembrane segment at 80 to 102 (YLLCLALCELLYTGTLPLWVIYI) threads the bilayer. The Extracellular segment spans residues 103–116 (RNQHRWTLGLLACK). A disulfide bond links Cys-115 and Cys-186. A helical transmembrane segment spans residues 117-138 (VTAYIFFCNIYVSILFLCCISC). Residues 139 to 158 (DRFVAVVYALESRGRRRRRT) are Cytoplasmic-facing. A helical transmembrane segment spans residues 159-178 (AILISACIFILVGIVHYPVF). Residues 179 to 197 (QTEDKETCFDMLQMDSRIA) are Extracellular-facing. The chain crosses the membrane as a helical span at residues 198-220 (GYYYARFTVGFAIPLSIIAFTNH). At 221–246 (RIFRSIKQSMGLSAAQKAKVKHSAIA) the chain is on the cytoplasmic side. The helical transmembrane segment at 247 to 269 (VVVIFLVCFAPYHLVLLVKAAAF) threads the bilayer. Topologically, residues 270–288 (SYYRGDRNAMCGLEERLYT) are extracellular. A helical transmembrane segment spans residues 289 to 311 (ASVVFLCLSTVNGVADPIIYVLA). The Cytoplasmic segment spans residues 312-380 (TDHSRQEVSR…PAKRLIEESC (69 aa)).

This sequence belongs to the G-protein coupled receptor 1 family. As to expression, highly expressed in macrophages and hematopoietic tissues rich in lymphocytes, like spleen and thymus. Weakly expressed in heart and lung. In atherosclerotic plaques, expression is observed around the lipid core and at the shoulder region.

Its subcellular location is the cell membrane. Its function is as follows. May be a receptor for oxidized free fatty acids derived from linoleic and arachidonic acids such as 9-hydroxyoctadecadienoic acid (9-HODE). Activates a G alpha protein, most likely G alpha(q). May be involved in apoptosis. Functions at the G2/M checkpoint to delay mitosis. May function as a sensor that monitors the oxidative states and mediates appropriate cellular responses such as secretion of paracrine signals and attenuation of proliferation. May mediate ths accumulation of intracellular inositol phosphates at acidic pH through proton-sensing activity. The polypeptide is Probable G-protein coupled receptor 132 (GPR132) (Homo sapiens (Human)).